Here is a 286-residue protein sequence, read N- to C-terminus: Acetyl-coenzyme A carboxylase carboxyl transferase subunit beta (286 aa).

Residues 23–286 form the CoA carboxyltransferase N-terminal domain; the sequence is IWVKCNNCNQ…ITNKPEPKKE (264 aa). Residues C27, C30, C46, and C49 each coordinate Zn(2+). The segment at 27-49 adopts a C4-type zinc-finger fold; the sequence is CNNCNQMIYKIELEKNLEVCPKC.

It belongs to the AccD/PCCB family. Acetyl-CoA carboxylase is a heterohexamer composed of biotin carboxyl carrier protein (AccB), biotin carboxylase (AccC) and two subunits each of ACCase subunit alpha (AccA) and ACCase subunit beta (AccD). Zn(2+) serves as cofactor.

Its subcellular location is the cytoplasm. The catalysed reaction is N(6)-carboxybiotinyl-L-lysyl-[protein] + acetyl-CoA = N(6)-biotinyl-L-lysyl-[protein] + malonyl-CoA. It functions in the pathway lipid metabolism; malonyl-CoA biosynthesis; malonyl-CoA from acetyl-CoA: step 1/1. Component of the acetyl coenzyme A carboxylase (ACC) complex. Biotin carboxylase (BC) catalyzes the carboxylation of biotin on its carrier protein (BCCP) and then the CO(2) group is transferred by the transcarboxylase to acetyl-CoA to form malonyl-CoA. This Wigglesworthia glossinidia brevipalpis protein is Acetyl-coenzyme A carboxylase carboxyl transferase subunit beta.